The following is a 1003-amino-acid chain: Serine/threonine-protein kinase spk-1 (1003 aa).

Disordered regions lie at residues 92–112, 169–309, and 337–408; these read NSTN…TQNE, NEND…SATS, and RPSI…KRGG. The segment covering 202–211 has biased composition (acidic residues); that stretch reads SDEEDVESQD. Residues 248–265 are compositionally biased toward basic and acidic residues; the sequence is SNDDKNEKDVLVDEDTSK. The segment covering 285–300 has biased composition (low complexity); that stretch reads TIDSSVSSSTSSSSTG. Residues 346–359 show a composition bias toward basic and acidic residues; that stretch reads KKTEVNANEERLDD. The region spanning 422–904 is the Protein kinase domain; that stretch reads YHVIRKLGWG…AKIALKHPFL (483 aa). Residues 428–436 and K451 each bind ATP; that span reads LGWGHFSTV. D555 acts as the Proton acceptor in catalysis. A disordered region spans residues 927–1003; the sequence is DGLIPEPFDG…DIERFQLDLQ (77 aa). A compositionally biased stretch (basic and acidic residues) spans 936 to 953; the sequence is GNEHQEVYRDENDSRSAS. Residues 954–964 show a composition bias toward low complexity; that stretch reads ERSANSRSAGG. Over residues 983–992 the composition is skewed to polar residues; it reads VITNNETTDI. Residues 994–1003 are compositionally biased toward basic and acidic residues; sequence DIERFQLDLQ.

It belongs to the protein kinase superfamily. Ser/Thr protein kinase family. Interacts with rsp-3. As to expression, predominantly coexpressed with rsp-3 in adult hermaphrodite germlines.

The enzyme catalyses L-seryl-[protein] + ATP = O-phospho-L-seryl-[protein] + ADP + H(+). It catalyses the reaction L-threonyl-[protein] + ATP = O-phospho-L-threonyl-[protein] + ADP + H(+). Required for embryogenesis and germline development in both adult hermaphrodites and males. SR-protein kinase (SRPK) that binds directly to and phosphorylates the RS domain of rsp-3/CeSF2 in vitro. The polypeptide is Serine/threonine-protein kinase spk-1 (spk-1) (Caenorhabditis elegans).